Consider the following 197-residue polypeptide: Beta-crystallin A2 (197 aa).

An N-terminal arm region spans residues 1–11; the sequence is MSSASAPGPAP. Beta/gamma crystallin 'Greek key' domains follow at residues 12 to 52 and 53 to 99; these read ACLT…KVEN and GAWV…RPVL. The connecting peptide stretch occupies residues 100 to 105; that stretch reads CANHSD. Beta/gamma crystallin 'Greek key' domains follow at residues 106-147 and 148-196; these read SRVT…KVSS and GAWV…RRVQ.

Belongs to the beta/gamma-crystallin family. As to quaternary structure, homo/heterodimer, or complexes of higher-order. The structure of beta-crystallin oligomers seems to be stabilized through interactions between the N-terminal arms.

Crystallins are the dominant structural components of the vertebrate eye lens. This is Beta-crystallin A2 (CRYBA2) from Oryctolagus cuniculus (Rabbit).